Consider the following 1043-residue polypeptide: Rho GTPase-activating protein gacZ (1043 aa).

The segment at 1–44 (MTTTNTSIFGPRVNNSKFNNNNNNNNNNNNNNNNTSNNNNSNII) is disordered. The segment covering 14–44 (NNSKFNNNNNNNNNNNNNNNNTSNNNNSNII) has biased composition (low complexity). Residues cysteine 71, cysteine 74, cysteine 82, cysteine 85, cysteine 91, histidine 95, histidine 103, and cysteine 107 each contribute to the Zn(2+) site. The segment at 71-107 (CVICKSKNVQVCTGCLMVYYCGAEHQNIDWPNHKSLC) adopts an MYND-type; atypical zinc-finger fold. Disordered regions lie at residues 137 to 163 (SGNR…NNNN), 199 to 532 (HLQQ…NNSN), 546 to 594 (DGLS…NGNR), 614 to 690 (FYQS…TNNN), 706 to 772 (NTSQ…QLSA), and 801 to 842 (NKVS…NNNN). Residues 201 to 225 (QQQIQQTQQTQQQPPPTTTSIPTQP) show a composition bias toward low complexity. A compositionally biased stretch (polar residues) spans 241–253 (SFKSSSSGDNTPI). Composition is skewed to low complexity over residues 254 to 293 (NQSP…NMSG) and 307 to 411 (NSIN…TNEE). Positions 453–466 (GTLKQSSSSDSIYF) are enriched in polar residues. Low complexity-rich tracts occupy residues 467–532 (NNNN…NNSN) and 547–594 (GLSY…NGNR). Positions 615–625 (YQSNKNQSNGY) are enriched in polar residues. Residues 644–671 (ENDDSHEECDDDDDDDDGGGQDGDDGLD) show a composition bias toward acidic residues. Composition is skewed to low complexity over residues 726 to 736 (DTQSQSTNSTT), 752 to 771 (SSDD…SQLS), 801 to 821 (NKVS…NNNN), and 829 to 842 (NNNN…NNNN). Residues 825–852 (DHNENNNNNNNNINNNNNNNNNNIENII) adopt a coiled-coil conformation. Positions 855-1043 (IPLEEAVKKS…FGIQTYNYNS (189 aa)) constitute a Rho-GAP domain.

The protein resides in the cytoplasm. Rho GTPase-activating protein involved in the signal transduction pathway. The protein is Rho GTPase-activating protein gacZ (gacZ) of Dictyostelium discoideum (Social amoeba).